A 240-amino-acid polypeptide reads, in one-letter code: Sugar fermentation stimulation protein homolog (240 aa).

Belongs to the SfsA family.

This chain is Sugar fermentation stimulation protein homolog, found in Saccharolobus islandicus (strain M.14.25 / Kamchatka #1) (Sulfolobus islandicus).